We begin with the raw amino-acid sequence, 416 residues long: Enolase (416 aa).

Position 160 (Gln-160) interacts with (2R)-2-phosphoglycerate. Glu-204 acts as the Proton donor in catalysis. Mg(2+) is bound by residues Asp-239, Glu-280, and Asp-306. (2R)-2-phosphoglycerate-binding residues include Lys-331, Arg-360, Ser-361, and Lys-382. The active-site Proton acceptor is Lys-331.

This sequence belongs to the enolase family. It depends on Mg(2+) as a cofactor.

It localises to the cytoplasm. It is found in the secreted. Its subcellular location is the cell surface. The enzyme catalyses (2R)-2-phosphoglycerate = phosphoenolpyruvate + H2O. It functions in the pathway carbohydrate degradation; glycolysis; pyruvate from D-glyceraldehyde 3-phosphate: step 4/5. Its function is as follows. Catalyzes the reversible conversion of 2-phosphoglycerate (2-PG) into phosphoenolpyruvate (PEP). It is essential for the degradation of carbohydrates via glycolysis. This is Enolase from Sulfurisphaera tokodaii (strain DSM 16993 / JCM 10545 / NBRC 100140 / 7) (Sulfolobus tokodaii).